The following is a 175-amino-acid chain: uncharacterized protein (175 aa).

The tract at residues 113-175 (AQLPRDSRGN…RTRSGGLERL (63 aa)) is disordered.

This is an uncharacterized protein from Bos taurus (Bovine).